We begin with the raw amino-acid sequence, 158 residues long: 18.2 kDa class I heat shock protein (158 aa).

One can recognise a sHSP domain in the interval 44-158 (ENSAFVSTRV…PEVKTIDISG (115 aa)).

It belongs to the small heat shock protein (HSP20) family. Forms oligomeric structures.

Its subcellular location is the cytoplasm. The polypeptide is 18.2 kDa class I heat shock protein (HSP18.2) (Medicago sativa (Alfalfa)).